Consider the following 284-residue polypeptide: 4-diphosphocytidyl-2-C-methyl-D-erythritol kinase (284 aa).

Lys13 is an active-site residue. 96 to 106 serves as a coordination point for ATP; sequence PMGGGLGGGSS. Asp138 is a catalytic residue.

The protein belongs to the GHMP kinase family. IspE subfamily.

It catalyses the reaction 4-CDP-2-C-methyl-D-erythritol + ATP = 4-CDP-2-C-methyl-D-erythritol 2-phosphate + ADP + H(+). The protein operates within isoprenoid biosynthesis; isopentenyl diphosphate biosynthesis via DXP pathway; isopentenyl diphosphate from 1-deoxy-D-xylulose 5-phosphate: step 3/6. In terms of biological role, catalyzes the phosphorylation of the position 2 hydroxy group of 4-diphosphocytidyl-2C-methyl-D-erythritol. This Chromobacterium violaceum (strain ATCC 12472 / DSM 30191 / JCM 1249 / CCUG 213 / NBRC 12614 / NCIMB 9131 / NCTC 9757 / MK) protein is 4-diphosphocytidyl-2-C-methyl-D-erythritol kinase.